The primary structure comprises 509 residues: Histidine--tRNA ligase, cytoplasmic (509 aa).

The residue at position 2 (Ala-2) is an N-acetylalanine. A WHEP-TRS domain is found at 3-59 (ERAALEELVKLQGERVRGLKQQKASAELIEEEVAKLLKLKAQLGPDESKQKFVLKTP). At Ser-66 the chain carries Phosphoserine. L-histidine-binding positions include 130-132 (DLT), Arg-157, Gln-173, Asp-177, Arg-326, and 330-331 (YY). Phosphoserine is present on Ser-356.

The protein belongs to the class-II aminoacyl-tRNA synthetase family. As to quaternary structure, homodimer.

It localises to the cytoplasm. It catalyses the reaction tRNA(His) + L-histidine + ATP = L-histidyl-tRNA(His) + AMP + diphosphate + H(+). Its function is as follows. Catalyzes the ATP-dependent ligation of histidine to the 3'-end of its cognate tRNA, via the formation of an aminoacyl-adenylate intermediate (His-AMP). Plays a role in axon guidance. The sequence is that of Histidine--tRNA ligase, cytoplasmic (HARS1) from Pongo abelii (Sumatran orangutan).